We begin with the raw amino-acid sequence, 58 residues long: Sperm histone P2b (58 aa).

Residues 20–41 (LRRRRYRSSRRRRRRPCRRRRH) form a disordered region.

Belongs to the protamine P2 family. As to expression, testis.

It is found in the nucleus. Its subcellular location is the chromosome. In terms of biological role, protamines substitute for histones in the chromatin of sperm during the haploid phase of spermatogenesis. They compact sperm DNA into a highly condensed, stable and inactive complex. The polypeptide is Sperm histone P2b (Equus caballus (Horse)).